The sequence spans 486 residues: MTRIKLNYFVIGVVALLLALALWPNIPWRNGQEGQLDRIKARGELRVSTISSPLIYSTGKDGPSGFDYELAKRFADYLGVKLVMTPHHNINDLFDTLDSDDADMIAAGLIYNSERLKRARTGPAYYSVSQQLVYRLGSPRPKSFSDLKGQLIVASGSAHMTTLKQLKQTKYPDLNWGSSVDRSGKELLEQVADGKLDYTLGDSVTIALLQRIHPQLAVAFDVTDEEPVTWYFQQSHDDSLYAAMLDFYSEMVEDGSLARLEEKYLGHVGSFDYVDTKTFLSAIDNVLPSFRPLFEKHAGEIDWRLLAAIAYQESHWNPQATSPTGVRGLMMLTRATASGLGVKDRVDPEESIRGGSVYLQRLMQKVPDTIPEDERIWFALAAYNLGYGHMLDARKLTKNQNGNPDSWVDVKMRLPMLSQKRYYPSTTYGYARGHEAYNYVENIRRYQVSLVGYLQEKEKKAAQHAAIEAELGKAYPVVGPGWSINN.

The N-terminal stretch at 1-21 (MTRIKLNYFVIGVVALLLALA) is a signal peptide. Residues 22–268 (LWPNIPWRNG…RLEEKYLGHV (247 aa)) are non-LT domain. The segment at 269–486 (GSFDYVDTKT…VVGPGWSINN (218 aa)) is LT domain. The active site involves E313.

In the N-terminal section; belongs to the bacterial solute-binding protein 3 family. It in the C-terminal section; belongs to the transglycosylase Slt family.

It localises to the cell outer membrane. The catalysed reaction is Exolytic cleavage of the (1-&gt;4)-beta-glycosidic linkage between N-acetylmuramic acid (MurNAc) and N-acetylglucosamine (GlcNAc) residues in peptidoglycan, from either the reducing or the non-reducing ends of the peptidoglycan chains, with concomitant formation of a 1,6-anhydrobond in the MurNAc residue.. Its function is as follows. Murein-degrading enzyme that degrades murein glycan strands and insoluble, high-molecular weight murein sacculi, with the concomitant formation of a 1,6-anhydromuramoyl product. Lytic transglycosylases (LTs) play an integral role in the metabolism of the peptidoglycan (PG) sacculus. Their lytic action creates space within the PG sacculus to allow for its expansion as well as for the insertion of various structures such as secretion systems and flagella. This is Membrane-bound lytic murein transglycosylase F from Yersinia enterocolitica serotype O:8 / biotype 1B (strain NCTC 13174 / 8081).